Reading from the N-terminus, the 633-residue chain is Threonine--tRNA ligase (633 aa).

Positions 1–61 (MINVYFSDNS…TEDCKFEVIT (61 aa)) constitute a TGS domain. The interval 242–533 (DHRKIGKELE…LIEHHSGKLP (292 aa)) is catalytic. Positions 333, 384, and 510 each coordinate Zn(2+).

The protein belongs to the class-II aminoacyl-tRNA synthetase family. In terms of assembly, homodimer. The cofactor is Zn(2+).

The protein resides in the cytoplasm. It catalyses the reaction tRNA(Thr) + L-threonine + ATP = L-threonyl-tRNA(Thr) + AMP + diphosphate + H(+). Functionally, catalyzes the attachment of threonine to tRNA(Thr) in a two-step reaction: L-threonine is first activated by ATP to form Thr-AMP and then transferred to the acceptor end of tRNA(Thr). Also edits incorrectly charged L-seryl-tRNA(Thr). This is Threonine--tRNA ligase from Ehrlichia ruminantium (strain Gardel).